Consider the following 150-residue polypeptide: Late promoter-activating protein (150 aa).

Trans-activating factor involved in the late regulation of the P1 lytic growth cycle. May be the transcriptional activator of all late P1 functions. This is Late promoter-activating protein (lpa) from Escherichia phage P1 (Bacteriophage P1).